Reading from the N-terminus, the 356-residue chain is Probable scoulerine-9-O-methyltransferase OMT2B (356 aa).

Met-173 is a binding site for S-adenosyl-L-methionine. Position 176 (Asp-176) interacts with substrate. S-adenosyl-L-methionine-binding positions include Thr-177, Gly-202, Asp-225, 245 to 246, and Lys-259; that span reads DI. 260 to 264 provides a ligand contact to substrate; that stretch reads YVLHN. Residue His-263 is the Proton acceptor of the active site.

The protein belongs to the class I-like SAM-binding methyltransferase superfamily. Cation-independent O-methyltransferase family. COMT subfamily.

It carries out the reaction (S)-scoulerine + S-adenosyl-L-methionine = (S)-tetrahydrocolumbamine + S-adenosyl-L-homocysteine + H(+). It participates in alkaloid biosynthesis. Its function is as follows. Methyltransferase involved in the biosynthesis of the benzylisoquinoline alkaloid noscapine. Catalyzes the conversion of (S)-scoulerine to (S)-tetrahydrocolumbamine. The heterodimers OMT2B-SOMT3 and OMT2B-6OMT do not possess 3-O-acetyl-4'-O-demethylpapaveroxine 4'-O-methyltransferase activity. The protein is Probable scoulerine-9-O-methyltransferase OMT2B of Papaver somniferum (Opium poppy).